Here is an 84-residue protein sequence, read N- to C-terminus: Small ribosomal subunit protein bS20 (84 aa).

This sequence belongs to the bacterial ribosomal protein bS20 family.

Binds directly to 16S ribosomal RNA. The protein is Small ribosomal subunit protein bS20 of Parabacteroides distasonis (strain ATCC 8503 / DSM 20701 / CIP 104284 / JCM 5825 / NCTC 11152).